Reading from the N-terminus, the 263-residue chain is Putative hydro-lyase Psyc_1103 (263 aa).

It belongs to the D-glutamate cyclase family.

The protein is Putative hydro-lyase Psyc_1103 of Psychrobacter arcticus (strain DSM 17307 / VKM B-2377 / 273-4).